The primary structure comprises 669 residues: DNA ligase (669 aa).

NAD(+) contacts are provided by residues 34–38, 83–84, and glutamate 114; these read DAEYD and SL. Residue lysine 116 is the N6-AMP-lysine intermediate of the active site. Arginine 137, glutamate 171, lysine 287, and lysine 311 together coordinate NAD(+). Zn(2+) contacts are provided by cysteine 405, cysteine 408, cysteine 423, and cysteine 428. Positions 591–669 constitute a BRCT domain; it reads NVESYFAGKT…EERFLQELNK (79 aa).

Belongs to the NAD-dependent DNA ligase family. LigA subfamily. Mg(2+) is required as a cofactor. Requires Mn(2+) as cofactor.

It catalyses the reaction NAD(+) + (deoxyribonucleotide)n-3'-hydroxyl + 5'-phospho-(deoxyribonucleotide)m = (deoxyribonucleotide)n+m + AMP + beta-nicotinamide D-nucleotide.. DNA ligase that catalyzes the formation of phosphodiester linkages between 5'-phosphoryl and 3'-hydroxyl groups in double-stranded DNA using NAD as a coenzyme and as the energy source for the reaction. It is essential for DNA replication and repair of damaged DNA. The protein is DNA ligase of Bacillus cereus (strain 03BB102).